The sequence spans 419 residues: Pyrophosphate--fructose 6-phosphate 1-phosphotransferase (419 aa).

Position 13 (Gly13) interacts with diphosphate. Residues 142–144, 190–192, Glu247, and 297–300 each bind substrate; these read TVD, MGR, and YLQR. The Proton acceptor role is filled by Asp144.

It belongs to the phosphofructokinase type A (PFKA) family. PPi-dependent PFK group II subfamily. Clade 'B2' sub-subfamily. In terms of assembly, homodimer. Mg(2+) is required as a cofactor.

The protein resides in the cytoplasm. It carries out the reaction beta-D-fructose 6-phosphate + diphosphate = beta-D-fructose 1,6-bisphosphate + phosphate + H(+). Its pathway is carbohydrate degradation; glycolysis; D-glyceraldehyde 3-phosphate and glycerone phosphate from D-glucose: step 3/4. Its activity is regulated as follows. Non-allosteric. Its function is as follows. Catalyzes the phosphorylation of D-fructose 6-phosphate, the first committing step of glycolysis. Uses inorganic phosphate (PPi) as phosphoryl donor instead of ATP like common ATP-dependent phosphofructokinases (ATP-PFKs), which renders the reaction reversible, and can thus function both in glycolysis and gluconeogenesis. Consistently, PPi-PFK can replace the enzymes of both the forward (ATP-PFK) and reverse (fructose-bisphosphatase (FBPase)) reactions. This Halomonas elongata (strain ATCC 33173 / DSM 2581 / NBRC 15536 / NCIMB 2198 / 1H9) protein is Pyrophosphate--fructose 6-phosphate 1-phosphotransferase.